A 91-amino-acid chain; its full sequence is Non-hemolytic enterotoxin 105 kDa component (91 aa).

Zn(2+) serves as cofactor.

The protein resides in the secreted. This protein is a metalloprotease with gelatinolytic and collagenolytic activity and is a component of the non-hemolytic enterotoxin complex (NHE). In Bacillus cereus, this protein is Non-hemolytic enterotoxin 105 kDa component.